A 295-amino-acid chain; its full sequence is Tyrosine recombinase XerC (295 aa).

Residues 1–84 form the Core-binding (CB) domain; that stretch reads MTLEEQFLSY…SLKSFYRFLT (84 aa). One can recognise a Tyr recombinase domain in the interval 105–289; the sequence is KLPEFFYQDE…SMQHLTVEYR (185 aa). Catalysis depends on residues R145, K169, H241, R244, and H267. Residue Y276 is the O-(3'-phospho-DNA)-tyrosine intermediate of the active site.

This sequence belongs to the 'phage' integrase family. XerC subfamily. As to quaternary structure, forms a cyclic heterotetrameric complex composed of two molecules of XerC and two molecules of XerD.

The protein localises to the cytoplasm. Functionally, site-specific tyrosine recombinase, which acts by catalyzing the cutting and rejoining of the recombining DNA molecules. The XerC-XerD complex is essential to convert dimers of the bacterial chromosome into monomers to permit their segregation at cell division. It also contributes to the segregational stability of plasmids. The chain is Tyrosine recombinase XerC from Lactobacillus delbrueckii subsp. bulgaricus (strain ATCC 11842 / DSM 20081 / BCRC 10696 / JCM 1002 / NBRC 13953 / NCIMB 11778 / NCTC 12712 / WDCM 00102 / Lb 14).